Consider the following 361-residue polypeptide: Replication-associated protein (361 aa).

Positions 8-116 (RVQSKNYFLT…DGDTIEWGDF (109 aa)) constitute a CRESS-DNA virus Rep endonuclease domain. Residues 15–18 (FLTY) carry the RCR-1 motif. A divalent metal cation-binding residues include E49, H57, and H59. Residues 57–59 (HLH) carry the RCR-2 motif. The For DNA cleavage activity role is filled by Y103. The RCR-3 signature appears at 103–106 (YIDK). Residue D107 participates in a divalent metal cation binding. The interval 143–153 (VQSALAVLREE) is binding to RBR1. Positions 156–176 (KDFVLQNHNIRSNLERIFAKA) are oligomerization. 222 to 229 (GDSRTGKT) lines the ATP pocket.

It belongs to the geminiviridae Rep protein family. As to quaternary structure, homooligomer. Interacts with the replication enhancer. protein (REn). Interacts with host retinoblastoma-related protein 1 (RBR1), and may thereby induce the transcription of host replicative enzymes even if the cell is not dividing anymore. Interacts with host PCNA. Interacts with host SCE1 protein. It depends on Mg(2+) as a cofactor. Mn(2+) is required as a cofactor.

The protein resides in the host nucleus. Functionally, essential for the replication of viral ssDNA. The closed circular ssDNA genome is first converted to a superhelical dsDNA. Rep binds a specific region at the genome origin of replication. It introduces an endonucleolytic nick within the conserved sequence 5'-TAATATTAC-3' in the intergenic region of the genome present in all geminiviruses, thereby initiating the rolling circle replication (RCR). Following cleavage, binds covalently to the 5'-phosphate of DNA as a tyrosyl ester. The cleavage gives rise to a free 3'-OH that serves as a primer for the cellular DNA polymerase. The polymerase synthesizes the (+) strand DNA by rolling circle mechanism. After one round of replication, a Rep-catalyzed nucleotidyl transfer reaction releases a circular single-stranded virus genome, thereby terminating the replication. Displays origin-specific DNA cleavage, nucleotidyl transferase, ATPase and helicase activities. The chain is Replication-associated protein from Nicotiana tabacum (Common tobacco).